A 247-amino-acid chain; its full sequence is Protein SODIUM POTASSIUM ROOT DEFECTIVE 3 (247 aa).

Residues 130–166 (GSTGQDTVATEESEASAPKRGSSGPVEEKKKSSGSGS) are disordered. Residues 167–235 (DQVVVLRVSL…KVKNAQFWTP (69 aa)) form the HMA domain. Residues C180 and C183 each contribute to the a metal cation site.

It localises to the cytoplasm. Its function is as follows. Heavy metal-associated protein involved in salt tolerance. This is Protein SODIUM POTASSIUM ROOT DEFECTIVE 3 from Arabidopsis thaliana (Mouse-ear cress).